The primary structure comprises 332 residues: MSSRMAGSAILRHVGGVRLFTASATSPAAAAAAAARPFLAGGEAVPGVWGLRLMSTSSVASTEAAAKAEAKKADAEKEVVVNSYWGIEQSKKLVREDGTEWKWSCFRPWETYTADTSIDLTKHHVPKTLLDKIAYWTVKSLRFPTDIFFQRRYGCRAMMLETVAAVPGMVGGMLLHLRSLRRFEQSGGWIRTLLEEAENERMHLMTFMEVANPKWYERALVITVQGVFFNAYFLGYLLSPKFAHRVVGYLEEEAIHSYTEFLKDLEAGKIDNVPAPAIAIDYWRLPANATLKDVVTVVRADEAHHRDVNHFASDIHYQGMELKQTPAPIGYH.

Residues 1-54 (MSSRMAGSAILRHVGGVRLFTASATSPAAAAAAAARPFLAGGEAVPGVWGLRLM) constitute a mitochondrion transit peptide. Residues 157–177 (AMMLETVAAVPGMVGGMLLHL) form a helical membrane-spanning segment. Fe cation contacts are provided by Glu-161, Glu-200, and His-203. The helical transmembrane segment at 219–239 (ALVITVQGVFFNAYFLGYLLS) threads the bilayer. Fe cation contacts are provided by Glu-251, Glu-302, and His-305.

The protein belongs to the alternative oxidase family. In terms of assembly, homodimer; disulfide-linked. Fe cation serves as cofactor. In terms of tissue distribution, expressed in roots, leaf sheaths and leaf blades.

Its subcellular location is the mitochondrion inner membrane. It catalyses the reaction 2 a ubiquinol + O2 = 2 a ubiquinone + 2 H2O. Functionally, catalyzes the cyanide-resistant oxidation of ubiquinol and the reduction of molecular oxygen to water, but does not translocate protons and consequently is not linked to oxidative phosphorylation. May increase respiration when the cytochrome respiratory pathway is restricted, or in response to low temperatures. The polypeptide is Ubiquinol oxidase 1a, mitochondrial (Oryza sativa subsp. japonica (Rice)).